The sequence spans 647 residues: DNA mismatch repair protein MutL (647 aa).

The interval 393–423 is disordered; it reads VSLVANKQQPTVKQAKRSADDSDSEHGKLDY. Positions 409 to 423 are enriched in basic and acidic residues; sequence RSADDSDSEHGKLDY.

The protein belongs to the DNA mismatch repair MutL/HexB family.

Its function is as follows. This protein is involved in the repair of mismatches in DNA. It is required for dam-dependent methyl-directed DNA mismatch repair. May act as a 'molecular matchmaker', a protein that promotes the formation of a stable complex between two or more DNA-binding proteins in an ATP-dependent manner without itself being part of a final effector complex. The sequence is that of DNA mismatch repair protein MutL from Streptococcus thermophilus (strain CNRZ 1066).